A 131-amino-acid chain; its full sequence is Actin-associated protein FAM107A (131 aa).

The stretch at 57–77 (VLEHRRRNQLIKKKEEELEAK) forms a coiled coil. Positions 61-71 (RRRNQLIKKKE) match the Nuclear localization signal motif.

As to quaternary structure, interacts with ACTB. Interacts with COMMD1; this interaction stabilizes COMMD1 in the nucleus. Interacts with MAP1A. Interacts with PRDX1. Interacts with F-actin.

It localises to the nucleus. The protein resides in the cytoplasm. The protein localises to the cytoskeleton. It is found in the stress fiber. Its subcellular location is the cell junction. It localises to the focal adhesion. The protein resides in the cell projection. The protein localises to the ruffle membrane. It is found in the synapse. Functionally, stress-inducible actin-binding protein that plays a role in synaptic and cognitive functions by modulating actin filamentous (F-actin) dynamics. Mediates polymerization of globular actin to F-actin. Also binds to, stabilizes and bundles F-actin. Involved in synaptic function by regulating neurite outgrowth in an actin-dependent manner and for the acquisition of hippocampus-dependent cognitive function, such as learning and long-term memory. Plays a role in the actin and microtubule cytoskeleton organization; negatively regulates focal adhesion (FA) assembly promoting malignant glial cell migration in an actin-, microtubule- and MAP1A-dependent manner. Also involved in neuroblastoma G1/S phase cell cycle progression and cell proliferation inhibition by stimulating ubiquitination of NF-kappa-B subunit RELA and NF-kappa-B degradation in a COMMD1- and actin-dependent manner. May play a role in tumor development. The sequence is that of Actin-associated protein FAM107A from Rattus norvegicus (Rat).